The sequence spans 66 residues: Cold shock protein CspC (66 aa).

Residues 4-63 form the CSD domain; the sequence is GTVKWFNAEKGFGFIERENGDDVFVHFSAIQSDGFKSLDEGQKVSFDVEQGARGAQAANV.

It localises to the cytoplasm. In Bacillus subtilis (strain 168), this protein is Cold shock protein CspC (cspC).